A 446-amino-acid chain; its full sequence is MDFISNKTPQIEAMLTEIGIQNVEELFKSIPSSLILQAPSVDDGLSEYEGIQLIESLAVRNTFPNLVSYLGAGAYEHHIPALVGAVCSKSEFLTAYTPYQAEASQGMLQIIFEFQSAICALTGMDVANASVYDGASACAEAILMSLRHHKTRRQILLSDSLHPHYKKVIEQYLKSQDCELITVPFLQEGTLDASFLKMYLNDQTAAILLQSPNFFGCIEDVQPITEMAKSQGALTILCANPISYGLLSSAKELGVDIAVGDCQPFGLSLSFGGPYAGYMACKQELMRQLPGRIVGETLDVQGSRGFVLTLQAREQHIRREKATSNICTNQALAALASLVAMLWYGKEGVKELALTNYQRANYLKFHLGKISTINVWNQGASFNEFVVDFKQDSNQVLEFFRLNGIEPGIELKRYYPSLKTCLLIAVTETKNQIQLDQFIKVCKELF.

The protein belongs to the GcvP family. N-terminal subunit subfamily. The glycine cleavage system is composed of four proteins: P, T, L and H. In this organism, the P 'protein' is a heterodimer of two subunits.

The enzyme catalyses N(6)-[(R)-lipoyl]-L-lysyl-[glycine-cleavage complex H protein] + glycine + H(+) = N(6)-[(R)-S(8)-aminomethyldihydrolipoyl]-L-lysyl-[glycine-cleavage complex H protein] + CO2. Its function is as follows. The glycine cleavage system catalyzes the degradation of glycine. The P protein binds the alpha-amino group of glycine through its pyridoxal phosphate cofactor; CO(2) is released and the remaining methylamine moiety is then transferred to the lipoamide cofactor of the H protein. In Protochlamydia amoebophila (strain UWE25), this protein is Probable glycine dehydrogenase (decarboxylating) subunit 1.